Reading from the N-terminus, the 169-residue chain is Peptide methionine sulfoxide reductase MsrA (169 aa).

Cysteine 10 is a catalytic residue.

Belongs to the MsrA Met sulfoxide reductase family.

The enzyme catalyses L-methionyl-[protein] + [thioredoxin]-disulfide + H2O = L-methionyl-(S)-S-oxide-[protein] + [thioredoxin]-dithiol. The catalysed reaction is [thioredoxin]-disulfide + L-methionine + H2O = L-methionine (S)-S-oxide + [thioredoxin]-dithiol. Its function is as follows. Has an important function as a repair enzyme for proteins that have been inactivated by oxidation. Catalyzes the reversible oxidation-reduction of methionine sulfoxide in proteins to methionine. This chain is Peptide methionine sulfoxide reductase MsrA, found in Streptococcus pyogenes serotype M3 (strain ATCC BAA-595 / MGAS315).